The sequence spans 520 residues: Protein EARLY FLOWERING 5 (520 aa).

Short sequence motifs (nuclear localization signal) lie at residues 16–23 (YRKQIRKR), 52–59 (IRKLDMSK), and 71–78 (KKRQLEDT). The tract at residues 83–410 (VKKRKEYDEK…PPSSFQDGQA (328 aa)) is disordered. 2 stretches are compositionally biased toward basic and acidic residues: residues 87-97 (KEYDEKKKEQG) and 114-126 (LTGEEDLKPEDSV). Positions 148-168 (SSIGLAISSDGASSSSAALSS) are enriched in low complexity. 3 stretches are compositionally biased toward pro residues: residues 198-207 (PLPPLPPLPP), 216-227 (SPFPPPPPGPPP), and 235-253 (PPLPPPPQLPQSSQPPPPG). Composition is skewed to polar residues over residues 267–281 (SDFTFDNRMNANITS), 300–312 (AESNASSFQNANL), and 326–343 (QQHQSTFAGAAASLTNFQ). Composition is skewed to pro residues over residues 346–369 (VHPPPGMLRFPPPPPPLDMHPPHP) and 378–403 (PRPPYGPPPGPPPMMRPPLPPGPPPS).

As to expression, in seedlings, mostly expressed in the shoot apical meristem (SAM) and root tip.

It is found in the nucleus. Involved in the regulation of flowering time in both long and short days. This chain is Protein EARLY FLOWERING 5, found in Arabidopsis thaliana (Mouse-ear cress).